Consider the following 234-residue polypeptide: Urease accessory protein UreF (234 aa).

Belongs to the UreF family. As to quaternary structure, ureD, UreF and UreG form a complex that acts as a GTP-hydrolysis-dependent molecular chaperone, activating the urease apoprotein by helping to assemble the nickel containing metallocenter of UreC. The UreE protein probably delivers the nickel.

Its subcellular location is the cytoplasm. Its function is as follows. Required for maturation of urease via the functional incorporation of the urease nickel metallocenter. This Azoarcus sp. (strain BH72) protein is Urease accessory protein UreF.